A 163-amino-acid chain; its full sequence is Nucleotide-binding protein NT01EI_1072 (163 aa).

This sequence belongs to the YajQ family.

Nucleotide-binding protein. The polypeptide is Nucleotide-binding protein NT01EI_1072 (Edwardsiella ictaluri (strain 93-146)).